The sequence spans 355 residues: uncharacterized protein (355 aa).

This sequence belongs to the ycf89 family.

The protein resides in the plastid. It localises to the chloroplast. This is an uncharacterized protein from Trieres chinensis (Marine centric diatom).